The chain runs to 254 residues: Zinc finger FYVE domain-containing protein 21 (254 aa).

The FYVE-type zinc finger occupies 44 to 104; sequence DKECPRCMQC…QCAGCAPVSR (61 aa). Residues C50, C53, C66, C69, C74, C77, C96, and C99 each coordinate Zn(2+). The segment at 107–254 is PH-like; the sequence is ADFYDRQLKL…AKLLYESRDQ (148 aa).

In terms of assembly, interacts with PTK2/FAK1.

The protein localises to the cell junction. Its subcellular location is the focal adhesion. The protein resides in the cytoplasmic vesicle. It localises to the endosome. Functionally, plays a role in cell adhesion, and thereby in cell motility which requires repeated formation and disassembly of focal adhesions. Regulates microtubule-induced PTK2/FAK1 dephosphorylation, an event important for focal adhesion disassembly, as well as integrin beta-1/ITGB1 cell surface expression. In Bos taurus (Bovine), this protein is Zinc finger FYVE domain-containing protein 21 (ZFYVE21).